A 145-amino-acid polypeptide reads, in one-letter code: 3-hydroxyacyl-[acyl-carrier-protein] dehydratase FabZ (145 aa).

Residue histidine 49 is part of the active site.

Belongs to the thioester dehydratase family. FabZ subfamily.

Its subcellular location is the cytoplasm. It catalyses the reaction a (3R)-hydroxyacyl-[ACP] = a (2E)-enoyl-[ACP] + H2O. Involved in unsaturated fatty acids biosynthesis. Catalyzes the dehydration of short chain beta-hydroxyacyl-ACPs and long chain saturated and unsaturated beta-hydroxyacyl-ACPs. The polypeptide is 3-hydroxyacyl-[acyl-carrier-protein] dehydratase FabZ (Rickettsia bellii (strain OSU 85-389)).